The chain runs to 107 residues: Putative double-stranded DNA mimic protein HS_0995 (107 aa).

Belongs to the putative dsDNA mimic protein family.

May act as a double-stranded DNA (dsDNA) mimic. Probably regulates the activity of a dsDNA-binding protein. This Histophilus somni (strain 129Pt) (Haemophilus somnus) protein is Putative double-stranded DNA mimic protein HS_0995.